A 128-amino-acid polypeptide reads, in one-letter code: Myelin basic protein (128 aa).

2 disordered regions span residues 1-24 (AGGA…EPAT) and 82-128 (TDGQ…PARR). Basic and acidic residues-rich tracts occupy residues 11 to 23 (GSRK…KEPA) and 96 to 107 (KSREAYRGRKDG).

The protein belongs to the myelin basic protein family. In terms of processing, the N-terminus is blocked.

The protein resides in the myelin membrane. This protein may function to maintain proper structure of myelin. This chain is Myelin basic protein (MBP), found in Carcharhinus obscurus (Dusky shark).